Consider the following 579-residue polypeptide: Nuclear receptor coactivator 5 (579 aa).

N-acetylmethionine is present on Met1. A disordered region spans residues 1–77; the sequence is MNTAPSRPSP…DIRDHRDSRS (77 aa). Residues 1–158 are transcription repression; the sequence is MNTAPSRPSP…RDSFDGRGPP (158 aa). Thr3 is modified (phosphothreonine). Phosphoserine occurs at positions 9, 21, 29, 34, 96, 116, 126, 143, and 151. Over residues 11 to 77 the composition is skewed to basic and acidic residues; it reads TRRDPYSFGD…DIRDHRDSRS (67 aa). Residues 148–172 form a disordered region; it reads YRDSFDGRGPPGPESQSRAKERLKR. The residue at position 274 (Thr274) is a Phosphothreonine. The LXXLL motif motif lies at 345-349; that stretch reads LINLL. Phosphoserine occurs at positions 378 and 381. Disordered stretches follow at residues 378-428 and 446-529; these read SADS…PTSQ and ANSS…RPVS. Composition is skewed to low complexity over residues 395–420 and 446–460; these read SGSSLKSQPSSQPLQSGQVLPSATPT and ANSSSASPSVATGSS. The tract at residues 458-579 is transcription activation; it reads GSSQNQNFST…APMGSYQRHY (122 aa). Positions 461 to 485 are enriched in polar residues; the sequence is QNQNFSTAANSQPQQRPQASGNQPP.

In terms of assembly, binds HTATIP2/TIP30. Interacts with YLPM1. Forms a complex with ILF2, ILF3, YLPM1, KHDRBS1, RBMX and PPP1CA.

The protein localises to the nucleus. Its function is as follows. Nuclear receptor coregulator that can have both coactivator and corepressor functions. Interacts with nuclear receptors for steroids (ESR1 and ESR2) independently of the steroid binding domain (AF-2) of the ESR receptors, and with the orphan nuclear receptor NR1D2. Involved in the coactivation of nuclear steroid receptors (ER) as well as the corepression of MYC in response to 17-beta-estradiol (E2). The chain is Nuclear receptor coactivator 5 (Ncoa5) from Mus musculus (Mouse).